A 166-amino-acid chain; its full sequence is NAD(P)H-quinone oxidoreductase subunit I, chloroplastic (166 aa).

2 4Fe-4S ferredoxin-type domains span residues 55–84 and 95–124; these read GRIH…VDWK and LNYS…MTEE. [4Fe-4S] cluster-binding residues include Cys64, Cys67, Cys70, Cys74, Cys104, Cys107, Cys110, and Cys114.

Belongs to the complex I 23 kDa subunit family. NDH is composed of at least 16 different subunits, 5 of which are encoded in the nucleus. Requires [4Fe-4S] cluster as cofactor.

Its subcellular location is the plastid. The protein resides in the chloroplast thylakoid membrane. The catalysed reaction is a plastoquinone + NADH + (n+1) H(+)(in) = a plastoquinol + NAD(+) + n H(+)(out). The enzyme catalyses a plastoquinone + NADPH + (n+1) H(+)(in) = a plastoquinol + NADP(+) + n H(+)(out). NDH shuttles electrons from NAD(P)H:plastoquinone, via FMN and iron-sulfur (Fe-S) centers, to quinones in the photosynthetic chain and possibly in a chloroplast respiratory chain. The immediate electron acceptor for the enzyme in this species is believed to be plastoquinone. Couples the redox reaction to proton translocation, and thus conserves the redox energy in a proton gradient. The polypeptide is NAD(P)H-quinone oxidoreductase subunit I, chloroplastic (Hofmeisteria fasciculata (Helogyne fasciculata)).